Consider the following 99-residue polypeptide: uncharacterized protein (99 aa).

The stretch at glutamate 3–tyrosine 68 forms a coiled coil.

This is an uncharacterized protein from Aquifex aeolicus (strain VF5).